A 758-amino-acid polypeptide reads, in one-letter code: Maturase-like protein 2 (758 aa).

The protein localises to the plastid. The protein resides in the chloroplast. The protein is Maturase-like protein 2 (mat2) of Euglena gracilis.